The following is a 335-amino-acid chain: Probable UDP-N-acetylglucosamine pyrophosphorylase (335 aa).

A Substrate binding motif is present at residues 45–48; the sequence is LSGG. UTP-binding positions include 45 to 48, Lys-59, Gln-120, and Gly-145; that span reads LSGG. Residue Asn-146 participates in substrate binding. Asp-170 is a UTP binding site. The Substrate binding signature appears at 218-219; it reads EY. Lys-278 is a binding site for UTP. Substrate is bound at residue Lys-308.

Belongs to the UDPGP type 1 family.

It is found in the cytoplasm. The catalysed reaction is N-acetyl-alpha-D-glucosamine 1-phosphate + UTP + H(+) = UDP-N-acetyl-alpha-D-glucosamine + diphosphate. The protein operates within nucleotide-sugar biosynthesis; UDP-N-acetyl-alpha-D-glucosamine biosynthesis; UDP-N-acetyl-alpha-D-glucosamine from N-acetyl-alpha-D-glucosamine 1-phosphate: step 1/1. This chain is Probable UDP-N-acetylglucosamine pyrophosphorylase (UAP1), found in Encephalitozoon cuniculi (strain GB-M1) (Microsporidian parasite).